The chain runs to 349 residues: Sexual stage-specific protein G37 (349 aa).

Residues 1-18 (MKLYLVTFLFFVIYKNKT) form the signal peptide. Topologically, residues 19-91 (FVDCVTKKQD…INQVSNNIMR (73 aa)) are extracellular. The helical transmembrane segment at 92-112 (VYISLLSLFLFPYFSYIGIFG) threads the bilayer. At 113–117 (HSRNK) the chain is on the cytoplasmic side. A helical transmembrane segment spans residues 118–138 (ANLTLSSLLAYFALLVSFFLF). Residues 139–140 (NG) lie on the Extracellular side of the membrane. Residues 141–161 (ILNIGFVTSLPLVVAVLIFIL) form a helical membrane-spanning segment. Over 162-176 (GVSDCEINFLYKYTR) the chain is Cytoplasmic. The chain crosses the membrane as a helical span at residues 177–197 (YIFCFIISKLIYDVVTYISKD). Residues 198 to 218 (GANIFDYGFSGHIYMNLLRGK) are Extracellular-facing. Residues 219–239 (YYIVLKLIHLIILSLISLIII) traverse the membrane as a helical segment. The Cytoplasmic portion of the chain corresponds to 240–262 (KICPKIFSNNHLKSPISITFDKY). The helical transmembrane segment at 263 to 283 (IISFLCSLPIATAISQVFYLL) threads the bilayer. Residues 284 to 305 (SKTINPIDPSIFFMIPSSINFS) lie on the Extracellular side of the membrane. Residues 306 to 326 (STGTIFSLSIWILMSYLMTFL) traverse the membrane as a helical segment. Over 327–349 (RNKVEADFNNILNKIPNNLPDFI) the chain is Cytoplasmic.

It localises to the cell membrane. In terms of biological role, involved in the development of male gametocytes. The chain is Sexual stage-specific protein G37 from Plasmodium berghei (strain Anka).